The following is a 464-amino-acid chain: ERO1-like protein alpha (464 aa).

A signal peptide spans 1 to 23 (MGRGWGLLVGLLGVVWLLRSGQG). 8 disulfides stabilise this stretch: C35–C48, C37–C46, C85–C387, C94–C99, C94–C130, C99–C104, C207–C237, and C390–C393. Phosphoserine occurs at positions 106, 142, and 144. FAD-binding residues include R186, T188, and W199. Positions 248 and 251 each coordinate FAD. N276 is a glycosylation site (N-linked (GlcNAc...) asparagine). FAD is bound by residues R283 and R296. N380 is a glycosylation site (N-linked (GlcNAc...) asparagine).

This sequence belongs to the EROs family. As to quaternary structure, predominantly monomer. May function both as a monomer and a homodimer. Interacts with PDILT. Interacts with ERP44; the interaction results in retention of ERO1A in the endoplasmic reticulum. FAD serves as cofactor. Post-translationally, N-glycosylated. In terms of processing, the Cys-94/Cys-99 and Cys-390/Cys-393 disulfide bonds constitute the redox-active center. The Cys-94/Cys-99 disulfide bond may accept electron from P4HB and funnel them to the active site disulfide Cys-390/Cys-393. The regulatory Cys-99/Cys-104 disulfide bond stabilizes the other regulatory bond Cys-94/Cys-130. Phosphorylated on Ser-144 by FAM20C in the Golgi which increases its enzymatic activity. Phosphorylation is induced by lactation. It is also induced by hypoxia and reductive stress.

It is found in the endoplasmic reticulum membrane. Its subcellular location is the golgi apparatus lumen. The protein localises to the secreted. It localises to the cell projection. The protein resides in the dendrite. Enzyme activity is tightly regulated to prevent the accumulation of reactive oxygen species in the endoplasmic reticulum. Reversibly down-regulated by the formation of disulfide bonds between the active site Cys-94 and Cys-130, and between Cys-99 and Cys-104. Glutathione may be required to regulate its activity in the endoplasmic reticulum. Functionally, oxidoreductase involved in disulfide bond formation in the endoplasmic reticulum. Efficiently reoxidizes P4HB/PDI, the enzyme catalyzing protein disulfide formation, in order to allow P4HB to sustain additional rounds of disulfide formation. Following P4HB reoxidation, passes its electrons to molecular oxygen via FAD, leading to the production of reactive oxygen species (ROS) in the cell. Required for the proper folding of immunoglobulins. Plays an important role in ER stress-induced, CHOP-dependent apoptosis by activating the inositol 1,4,5-trisphosphate receptor IP3R1. The protein is ERO1-like protein alpha of Rattus norvegicus (Rat).